Consider the following 469-residue polypeptide: Ubiquitin carboxyl-terminal hydrolase MINDY-1 (469 aa).

The tract at residues 1–85 is disordered; the sequence is MEHHQPEDPA…APPGPTLGTL (85 aa). The span at 34 to 53 shows a compositional bias: basic and acidic residues; sequence HPQDTDARDADGEAGEREPA. A Phosphoserine modification is found at serine 103. Catalysis depends on cysteine 137, which acts as the Nucleophile. Histidine 319 (proton acceptor) is an active-site residue. Positions 388–426 are ubiquitin-binding domain (UBD); that stretch reads QVDQDYLIALSLQQQQPRGTLGLTDLELAQQLQQEEYQQ. Positions 428–469 are disordered; the sequence is QAAQPVWMRTRALSPQGRGATSGRPAGERRQRPKHESDCILL. At serine 441 the chain carries Phosphoserine. Positions 453 to 469 are enriched in basic and acidic residues; that stretch reads AGERRQRPKHESDCILL.

The protein belongs to the MINDY deubiquitinase family. FAM63 subfamily.

It carries out the reaction Thiol-dependent hydrolysis of ester, thioester, amide, peptide and isopeptide bonds formed by the C-terminal Gly of ubiquitin (a 76-residue protein attached to proteins as an intracellular targeting signal).. Functionally, hydrolase that can specifically remove 'Lys-48'-linked conjugated ubiquitin from proteins. Has exodeubiquitinase activity and has a preference for long polyubiquitin chains. May play a regulatory role at the level of protein turnover. The sequence is that of Ubiquitin carboxyl-terminal hydrolase MINDY-1 (MINDY1) from Pongo abelii (Sumatran orangutan).